The following is a 2542-amino-acid chain: Talin-2 (2542 aa).

An FERM domain is found at 88-406; that stretch reads RPQKIRMLDG…GYIDIILKKK (319 aa). An interaction with PIP5K1C region spans residues 312 to 406; it reads GVSFFLVKEK…GYIDIILKKK (95 aa). Residues serine 428, serine 449, serine 623, and serine 1023 each carry the phosphoserine modification. Position 1665 is a phosphotyrosine (tyrosine 1665). Threonine 1843 is subject to Phosphothreonine. In terms of domain architecture, I/LWEQ spans 2294-2533; that stretch reads TEWVDPEDPT…QIRQQQYKFL (240 aa).

As to quaternary structure, interacts directly with PIP5K1C.

The protein resides in the cytoplasm. It localises to the cell junction. Its subcellular location is the focal adhesion. The protein localises to the synapse. It is found in the cell membrane. The protein resides in the cytoskeleton. Functionally, as a major component of focal adhesion plaques that links integrin to the actin cytoskeleton, may play an important role in cell adhesion. Recruits PIP5K1C to focal adhesion plaques and strongly activates its kinase activity. The polypeptide is Talin-2 (TLN2) (Homo sapiens (Human)).